The primary structure comprises 246 residues: Osmotin-like protein TPM-1 (246 aa).

The signal sequence occupies residues 1-21 (MAYLRSSFVFFLLAFVTYTYA). Cystine bridges form between C30-C225, C72-C82, C87-C93, C141-C213, C146-C196, C154-C164, C168-C177, and C178-C183.

It belongs to the thaumatin family.

It is found in the vacuole. The catalysed reaction is Endohydrolysis of (1-&gt;3)- or (1-&gt;4)-linkages in beta-D-glucans when the glucose residue whose reducing group is involved in the linkage to be hydrolyzed is itself substituted at C-3.. Its function is as follows. Antifungal protein that inhibits the growth of several phytopathogenic fungi (e.g. Trichothecium roseum, Fusarium oxysporum, Phytophthora citrophthora and Colletotrichum coccodes). May bind to beta-glucans and have beta-1,3-D-glucanase activity. The sequence is that of Osmotin-like protein TPM-1 from Solanum lycopersicum (Tomato).